A 186-amino-acid chain; its full sequence is Ribosome-recycling factor (186 aa).

Belongs to the RRF family.

Its subcellular location is the cytoplasm. Functionally, responsible for the release of ribosomes from messenger RNA at the termination of protein biosynthesis. May increase the efficiency of translation by recycling ribosomes from one round of translation to another. The protein is Ribosome-recycling factor of Burkholderia mallei (strain NCTC 10247).